The primary structure comprises 520 residues: Peptide chain release factor 3 (520 aa).

The tr-type G domain maps to 8-273 (ESRKTFAIIS…AYVDHAPMPN (266 aa)). GTP-binding positions include 17-24 (SHPDAGKT), 85-89 (DTPGH), and 139-142 (NKLD).

This sequence belongs to the TRAFAC class translation factor GTPase superfamily. Classic translation factor GTPase family. PrfC subfamily.

The protein resides in the cytoplasm. Functionally, increases the formation of ribosomal termination complexes and stimulates activities of RF-1 and RF-2. It binds guanine nucleotides and has strong preference for UGA stop codons. It may interact directly with the ribosome. The stimulation of RF-1 and RF-2 is significantly reduced by GTP and GDP, but not by GMP. The polypeptide is Peptide chain release factor 3 (Staphylococcus carnosus (strain TM300)).